The primary structure comprises 656 residues: Anion exchange transporter (656 aa).

Residues 1–75 lie on the Cytoplasmic side of the membrane; sequence MTGAKRKKRS…LSFAMLSSVH (75 aa). A helical transmembrane segment spans residues 76–96; it reads PVFGLYGSLFPAIIYAIFGMG. The Extracellular segment spans residues 97 to 144; the sequence is RHVATGTFALTSLISANAVERLVPQSSRNLTTQSNSSVLGLSEFELQR. A helical transmembrane segment spans residues 145 to 165; that stretch reads IGVAAAVSFLGGVIQLVMFVL. A topological domain (cytoplasmic) is located at residue Gln-166. A helical transmembrane segment spans residues 167 to 187; sequence LGSATFLLTEPVISAMTTGAA. The Extracellular segment spans residues 188–199; it reads THVVTSQVKYLL. A helical transmembrane segment spans residues 200–220; the sequence is GIKMPYISGPLGFFYIYAYVF. Residues 221-222 lie on the Cytoplasmic side of the membrane; sequence EN. A helical transmembrane segment spans residues 223-243; sequence IKSVQLEALLFSLLSIIVLVL. At 244 to 254 the chain is on the extracellular side; that stretch reads VKELNEQFKRK. The helical transmembrane segment at 255–275 threads the bilayer; that stretch reads IKVVLPVDLVLIIAASFACYC. Residues 276–306 lie on the Cytoplasmic side of the membrane; the sequence is TNMENTYGLEVVGHIPNGIPPPRAPPMNILS. A helical transmembrane segment spans residues 307 to 327; that stretch reads AVLTEAFGVALVGYVASLALA. Residues 328 to 343 are Extracellular-facing; that stretch reads QGSAKKFKYSVDDNQE. A helical transmembrane segment spans residues 344 to 364; it reads FLAHGLSNVIPSFLFCIPSAA. At 365–383 the chain is on the cytoplasmic side; the sequence is AMGRTAGLYSTGAKTQVAC. 2 helical membrane passes run 384-404 and 405-425; these read LISC…LYWL and PMCV…IQFR. Over 426-448 the chain is Extracellular; the sequence is DLKKYWNVDKIDWGIWISTYIFT. A helical membrane pass occupies residues 449–469; sequence ICFAANVGLLFGVICTIAIVL. The Cytoplasmic portion of the chain corresponds to 470 to 656; that stretch reads GRFPRAKTLS…LSKASDHSEV (187 aa). The 150-residue stretch at 492 to 641 folds into the STAS domain; that stretch reads TEMHDETSQQ…DSVPAAISII (150 aa). The tract at residues 641-656 is membrane targeting; sequence IQSNKNLSKASDHSEV.

This sequence belongs to the SLC26A/SulP transporter (TC 2.A.53) family. As to expression, expressed in the Reissner's membrane epithelial cells in the cochlea (at protein level). Expressed in the retinal pigment epithelium (at protein level). Abundantly expressed in parietal cells on the glandular portion of the stomach. Lower levels are observed in the kidney, with expression in the proximal tubule and thick ascending limb of the loop of Henle. Also expressed in distal segments of nephron, in extraglomerular mesagial cells and a subpopulation of intercalated cells of outer medullary collecting ducts. Expressed in the thyroid gland.

It localises to the basolateral cell membrane. Its subcellular location is the recycling endosome membrane. The protein resides in the apical cell membrane. It is found in the lateral cell membrane. It carries out the reaction chloride(in) = chloride(out). The enzyme catalyses iodide(out) = iodide(in). The catalysed reaction is bromide(in) = bromide(out). It catalyses the reaction oxalate(in) = oxalate(out). It carries out the reaction nitrate(in) = nitrate(out). The enzyme catalyses sulfate(in) = sulfate(out). The catalysed reaction is hydrogencarbonate(in) = hydrogencarbonate(out). It catalyses the reaction D-gluconate(in) = D-gluconate(out). It carries out the reaction thiocyanate(in) = thiocyanate(out). The enzyme catalyses hydrogencarbonate(in) + chloride(out) = hydrogencarbonate(out) + chloride(in). Regulated by pH. Activity inhibited by all inhibitors of several anion channels and transporters, including 4,4'-Di-isothiocyanatostilbene-2,2'-disulfonic acid (DIDS), diphenylamine-2-carboxylic acid, glybenclamide and 5-Nitro-2-(3-phenylpropyl-amino)benzoic acid. Acts as an anion channel mediating the transport of chloride, bromide, iodide, nitrate, sulfate, gluconate, thiocyanate and bicarbonate ions. Its permeability towards bicarbonate is weak and increases when pH is above 7. Mediates oxalate transport. Mediates thiocyanate transport in retinal pigment epithelium cells. Mediates iodide transport in the thyroid gland, playing an important role in the synthesis of thyroid hormones and the maintenance of thyroid function. Although it is an anion channel, according to PubMed:12736153 and PubMed:19723628 it has been shown to exhibit chloride-bicarbonate exchanger activity. This Mus musculus (Mouse) protein is Anion exchange transporter.